A 338-amino-acid polypeptide reads, in one-letter code: Glyceraldehyde-3-phosphate dehydrogenase 2 (338 aa).

Residues Thr13 to Ile14 and Gly111 each bind NAD(+). D-glyceraldehyde 3-phosphate is bound at residue Ser140–Asn142. Cys141 (nucleophile) is an active-site residue. Arg169 is a binding site for NAD(+). His195–Gly196 is a binding site for D-glyceraldehyde 3-phosphate. NAD(+) is bound at residue Gln300.

Belongs to the glyceraldehyde-3-phosphate dehydrogenase family. Homotetramer.

The protein localises to the cytoplasm. The catalysed reaction is D-glyceraldehyde 3-phosphate + phosphate + NADP(+) = (2R)-3-phospho-glyceroyl phosphate + NADPH + H(+). It carries out the reaction D-glyceraldehyde 3-phosphate + phosphate + NAD(+) = (2R)-3-phospho-glyceroyl phosphate + NADH + H(+). Its pathway is carbohydrate degradation; glycolysis; pyruvate from D-glyceraldehyde 3-phosphate: step 1/5. This is Glyceraldehyde-3-phosphate dehydrogenase 2 from Methanosarcina barkeri (strain Fusaro / DSM 804).